A 323-amino-acid chain; its full sequence is ATP synthase gamma chain (323 aa).

The interval 215–237 is disordered; it reads PAGGPAKEQEQGDEGGHGAPSAA. A compositionally biased stretch (basic and acidic residues) spans 221-230; it reads KEQEQGDEGG.

It belongs to the ATPase gamma chain family. F-type ATPases have 2 components, CF(1) - the catalytic core - and CF(0) - the membrane proton channel. CF(1) has five subunits: alpha(3), beta(3), gamma(1), delta(1), epsilon(1). CF(0) has three main subunits: a, b and c.

It localises to the cell inner membrane. Produces ATP from ADP in the presence of a proton gradient across the membrane. The gamma chain is believed to be important in regulating ATPase activity and the flow of protons through the CF(0) complex. The protein is ATP synthase gamma chain of Sorangium cellulosum (strain So ce56) (Polyangium cellulosum (strain So ce56)).